Consider the following 190-residue polypeptide: Lipid A acyltransferase PagP (190 aa).

The first 24 residues, 1–24, serve as a signal peptide directing secretion; that stretch reads MNRYLLTTLSAPLLALFFSFSLQA. Active-site residues include His-62, Asp-105, and Ser-106.

It belongs to the lipid A palmitoyltransferase family. Homodimer.

The protein resides in the cell outer membrane. The catalysed reaction is a lipid A + a 1,2-diacyl-sn-glycero-3-phosphocholine = a hepta-acyl lipid A + a 2-acyl-sn-glycero-3-phosphocholine. It carries out the reaction a lipid IVA + a 1,2-diacyl-sn-glycero-3-phosphocholine = a lipid IVB + a 2-acyl-sn-glycero-3-phosphocholine. It catalyses the reaction a lipid IIA + a 1,2-diacyl-sn-glycero-3-phosphocholine = a lipid IIB + a 2-acyl-sn-glycero-3-phosphocholine. Its function is as follows. Transfers a fatty acid residue from the sn-1 position of a phospholipid to the N-linked hydroxyfatty acid chain on the proximal unit of lipid A or its precursors. In Pantoea ananatis (strain LMG 20103), this protein is Lipid A acyltransferase PagP.